The sequence spans 335 residues: Beta-ketoacyl-[acyl-carrier-protein] synthase III (335 aa).

Active-site residues include C119 and H261. Residues 262–266 (QANQR) are ACP-binding. N291 is a catalytic residue.

It belongs to the thiolase-like superfamily. FabH family. As to quaternary structure, homodimer.

It is found in the cytoplasm. The catalysed reaction is malonyl-[ACP] + acetyl-CoA + H(+) = 3-oxobutanoyl-[ACP] + CO2 + CoA. It functions in the pathway lipid metabolism; fatty acid biosynthesis. Its function is as follows. Catalyzes the condensation reaction of fatty acid synthesis by the addition to an acyl acceptor of two carbons from malonyl-ACP. Catalyzes the first condensation reaction which initiates fatty acid synthesis and may therefore play a role in governing the total rate of fatty acid production. Possesses both acetoacetyl-ACP synthase and acetyl transacylase activities. Its substrate specificity determines the biosynthesis of branched-chain and/or straight-chain of fatty acids. The protein is Beta-ketoacyl-[acyl-carrier-protein] synthase III of Prochlorococcus marinus (strain MIT 9215).